A 137-amino-acid chain; its full sequence is Small integral membrane protein 9 (137 aa).

Positions 1–23 are cleaved as a signal peptide; the sequence is MKPLKLFCIGLLLCPLVCLLLET. Over 24–84 the chain is Extracellular; that stretch reads APPPSALLTL…NHLSDFFKSS (61 aa). The chain crosses the membrane as a helical span at residues 85–105; the sequence is IPPAAIFALFVTTAIMRAAIV. Over 106–137 the chain is Cytoplasmic; the sequence is NKRLEEPHRQWTIDQRSSLEMQNMNLIKLFGG.

It localises to the cell membrane. The sequence is that of Small integral membrane protein 9 (Smim9) from Mus musculus (Mouse).